A 53-amino-acid polypeptide reads, in one-letter code: Mannose/glucose-specific lectin alpha 1 chain (53 aa).

Belongs to the leguminous lectin family. In terms of assembly, tetramer of two alpha and two beta chains.

This is Mannose/glucose-specific lectin alpha 1 chain from Lathyrus ochrus (Cyprus-vetch).